A 279-amino-acid polypeptide reads, in one-letter code: Acetylglutamate kinase (279 aa).

Substrate is bound by residues 64 to 65 (GG), R86, and N177.

This sequence belongs to the acetylglutamate kinase family. ArgB subfamily.

The protein resides in the cytoplasm. It catalyses the reaction N-acetyl-L-glutamate + ATP = N-acetyl-L-glutamyl 5-phosphate + ADP. It participates in amino-acid biosynthesis; L-arginine biosynthesis; N(2)-acetyl-L-ornithine from L-glutamate: step 2/4. Its function is as follows. Catalyzes the ATP-dependent phosphorylation of N-acetyl-L-glutamate. In Campylobacter jejuni subsp. doylei (strain ATCC BAA-1458 / RM4099 / 269.97), this protein is Acetylglutamate kinase.